Here is a 369-residue protein sequence, read N- to C-terminus: 5-amino-6-(D-ribitylamino)uracil--L-tyrosine 4-hydroxyphenyl transferase (369 aa).

Residues 56 to 292 (VTFVVNRNIN…AVARLYFGPL (237 aa)) form the Radical SAM core domain. [4Fe-4S] cluster contacts are provided by Cys70, Cys74, and Cys77.

It belongs to the radical SAM superfamily. CofH family. As to quaternary structure, consists of two subunits, CofG and CofH. The cofactor is [4Fe-4S] cluster.

The enzyme catalyses 5-amino-6-(D-ribitylamino)uracil + L-tyrosine + S-adenosyl-L-methionine = 5-amino-5-(4-hydroxybenzyl)-6-(D-ribitylimino)-5,6-dihydrouracil + 2-iminoacetate + 5'-deoxyadenosine + L-methionine + H(+). The protein operates within cofactor biosynthesis; coenzyme F0 biosynthesis. Its function is as follows. Catalyzes the radical-mediated synthesis of 5-amino-5-(4-hydroxybenzyl)-6-(D-ribitylimino)-5,6-dihydrouracil from 5-amino-6-(D-ribitylamino)uracil and L-tyrosine. The chain is 5-amino-6-(D-ribitylamino)uracil--L-tyrosine 4-hydroxyphenyl transferase from Methanopyrus kandleri (strain AV19 / DSM 6324 / JCM 9639 / NBRC 100938).